We begin with the raw amino-acid sequence, 477 residues long: Putative 4-(hydroxymethyl)benzenesulfonate dehydrogenase TsaD2 (477 aa).

Residues 154–155 (WN), 178–181 (KAAE), and 230–231 (GS) each bind NAD(+). The active-site Proton acceptor is the Glu-252. Leu-253 is an NAD(+) binding site. Cys-286 (nucleophile) is an active-site residue. Residue Glu-381 coordinates NAD(+).

This sequence belongs to the aldehyde dehydrogenase family. Homodimer.

It carries out the reaction 4-(hydroxymethyl)benzenesulfonate + NAD(+) = 4-formylbenzenesulfonate + NADH + H(+). In terms of biological role, involved in the toluene-4-sulfonate degradation pathway. Does not discriminate between the sulfonate and the carboxyl substituents and can also be involved in the p-toluenecarboxylate degradation pathway. In Comamonas testosteroni (Pseudomonas testosteroni), this protein is Putative 4-(hydroxymethyl)benzenesulfonate dehydrogenase TsaD2 (tsaD2).